The primary structure comprises 323 residues: Conjugal transfer protein TrbB (323 aa).

ATP is bound at residue 151 to 158 (GGTGSGKT).

It belongs to the GSP E family.

It is found in the cytoplasm. In Rhizobium radiobacter (Agrobacterium tumefaciens), this protein is Conjugal transfer protein TrbB (trbB).